A 623-amino-acid polypeptide reads, in one-letter code: E3 ubiquitin-protein ligase ORTHRUS 5 (623 aa).

Residues 12–62 form a PHD-type zinc finger; that stretch reads DGVCMRCQVNPPSEETLTCGTCVTPWHVSCLLPESLASSTGDWECPDCSGV. The RING-type 1 zinc finger occupies 129–169; that stretch reads CSICIQLPERPVTTPCGHNFCLKCFEKWAVGQGKLTCMICR. One can recognise a YDG domain in the interval 258 to 407; the sequence is TRNQGVLVGE…HKMCRYLFVR (150 aa). The RING-type 2 zinc finger occupies 498 to 555; that stretch reads CQICRKVLSLPVTTPCAHNFCKACLEAKFAGITQLRDRSNGVRKLRAKKNIMTCPCCT. The segment at 580 to 623 is disordered; the sequence is KSEEEAEVAESSNISEEEGEEESEPPTKKIKMDKNSVGGTSLSA. Residues 594–603 are compositionally biased toward acidic residues; that stretch reads SEEEGEEESE. Residues 604-613 are compositionally biased toward basic and acidic residues; that stretch reads PPTKKIKMDK.

Expressed in inflorescences.

It localises to the nucleus. It carries out the reaction S-ubiquitinyl-[E2 ubiquitin-conjugating enzyme]-L-cysteine + [acceptor protein]-L-lysine = [E2 ubiquitin-conjugating enzyme]-L-cysteine + N(6)-ubiquitinyl-[acceptor protein]-L-lysine.. It participates in protein modification; protein ubiquitination. Functionally, E3 ubiquitin-protein ligase. Participates in CpG methylation-dependent transcriptional regulation and epigenetic transcriptional silencing. Mediates ubiquitination with the E2 ubiquitin-conjugating enzyme UBC11. The chain is E3 ubiquitin-protein ligase ORTHRUS 5 (ORTH5) from Arabidopsis thaliana (Mouse-ear cress).